A 407-amino-acid polypeptide reads, in one-letter code: Protein trichome birefringence-like 12 (407 aa).

Residues 21–41 (SLLPRILLLSLLLLLFYSLIL) traverse the membrane as a helical; Signal-anchor for type II membrane protein segment. The GDS motif motif lies at 130–132 (GDS). The short motif at 379 to 393 (DCMHWCLPGVPDTWV) is the DCXHWCLPGXXDXWN motif element.

The protein belongs to the PC-esterase family. TBL subfamily.

Its subcellular location is the membrane. Functionally, may act as a bridging protein that binds pectin and other cell wall polysaccharides. Probably involved in maintaining esterification of pectins. May be involved in the specific O-acetylation of cell wall polymers. This is Protein trichome birefringence-like 12 (TBL12) from Arabidopsis thaliana (Mouse-ear cress).